The following is a 280-amino-acid chain: Sulfur carrier protein FdhD (280 aa).

Cys-121 (cysteine persulfide intermediate) is an active-site residue. 258–263 lines the Mo-bis(molybdopterin guanine dinucleotide) pocket; the sequence is FSRPGR.

Belongs to the FdhD family.

The protein localises to the cytoplasm. In terms of biological role, required for formate dehydrogenase (FDH) activity. Acts as a sulfur carrier protein that transfers sulfur from IscS to the molybdenum cofactor prior to its insertion into FDH. The chain is Sulfur carrier protein FdhD from Cronobacter sakazakii (strain ATCC BAA-894) (Enterobacter sakazakii).